Consider the following 215-residue polypeptide: Late embryogenesis abundant protein 14 (215 aa).

2 disordered regions span residues 1–129 and 190–215; these read MASQ…GQTG and SGDN…SDYQ. 4 stretches are compositionally biased toward basic and acidic residues: residues 13-24, 32-41, 54-81, and 88-111; these read GETKARAEEKTG, EKAREAKDTA, GAKE…KDAA, and AMDK…DRAA. Residues 192-215 are compositionally biased toward polar residues; the sequence is DNKNNAAAGKDTSTYKPGTGSDYQ.

This sequence belongs to the LEA type 4 family. In terms of tissue distribution, expressed in the shoot apex and leaves. Expressed in dry seeds. Expressed in roots and leaves.

The protein localises to the nucleus. This Oryza sativa subsp. japonica (Rice) protein is Late embryogenesis abundant protein 14.